The chain runs to 162 residues: Selenoprotein F (162 aa).

An N-terminal signal peptide occupies residues 1 to 28; that stretch reads MAAGQGGWLRPALGLRLLLATAFQAVSA. Residue selenocysteine 93 is a non-standard amino acid, selenocysteine.

It belongs to the selenoprotein M/F family. In terms of assembly, forms a tight complex with UGGT1/UGCGL1. Interacts with UGGT2/UGCGL2. Interacts with RDH11. As to expression, highest levels in prostate, lower levels in brain, lung, thyroid gland, and large intestine.

It is found in the endoplasmic reticulum lumen. In terms of biological role, may be involved in redox reactions associated with the formation of disulfide bonds. May contribute to the quality control of protein folding in the endoplasmic reticulum. May regulate protein folding by enhancing the catalytic activity of UGGT1/UGCGL1 and UGGT2/UGCGL2. This is Selenoprotein F from Rattus norvegicus (Rat).